We begin with the raw amino-acid sequence, 572 residues long: NADP-dependent malic enzyme (572 aa).

Met-1 bears the N-acetylmethionine mark. The Proton donor role is filled by Tyr-102. NADP(+) is bound at residue Arg-155. Lys-173 functions as the Proton acceptor in the catalytic mechanism. Positions 245, 246, and 269 each coordinate a divalent metal cation. NADP(+) contacts are provided by residues Asp-269 and 301–318 (GAGE…MAME). Ser-336 bears the Phosphoserine mark.

The protein belongs to the malic enzymes family. In terms of assembly, homotetramer. Mg(2+) is required as a cofactor. Requires Mn(2+) as cofactor.

It localises to the cytoplasm. It catalyses the reaction (S)-malate + NADP(+) = pyruvate + CO2 + NADPH. The enzyme catalyses oxaloacetate + H(+) = pyruvate + CO2. In terms of biological role, catalyzes the oxidative decarboxylation of (S)-malate in the presence of NADP(+) and divalent metal ions, and decarboxylation of oxaloacetate. This Mus musculus (Mouse) protein is NADP-dependent malic enzyme (Me1).